A 319-amino-acid polypeptide reads, in one-letter code: Ribonucleoside-diphosphate reductase small chain (319 aa).

Residues Asp70, Glu101, and His104 each coordinate Fe cation. Tyr108 is an active-site residue. Positions 163, 197, and 200 each coordinate Fe cation. The interaction with R1 stretch occupies residues 313–319 (FSLDVDF).

Belongs to the ribonucleoside diphosphate reductase small chain family. As to quaternary structure, interacts with RNR1/OPG080 subunit. Can interact with host RNR1 supunit. The cofactor is Fe cation.

The catalysed reaction is a 2'-deoxyribonucleoside 5'-diphosphate + [thioredoxin]-disulfide + H2O = a ribonucleoside 5'-diphosphate + [thioredoxin]-dithiol. Functionally, ribonucleoside-diphosphate reductase holoenzyme provides the precursors necessary for viral DNA synthesis. Allows virus growth in non-dividing cells. Catalyzes the biosynthesis of deoxyribonucleotides from the corresponding ribonucleotides. The polypeptide is Ribonucleoside-diphosphate reductase small chain (OPG048) (Bos taurus (Bovine)).